A 567-amino-acid polypeptide reads, in one-letter code: Polyadenylate-binding protein-interacting protein 7 (567 aa).

The interval 1–22 (MSLTKKASEPKLSGTSIKPTTL) is disordered. Residues 13–22 (SGTSIKPTTL) show a composition bias toward polar residues. A PAM2-like motif is present at residues 21 to 31 (TLNPHAAEFVP). Residues 215–259 (DMEVNPVDFLASQFPGFAAESLAEVYFANGCDLQLTIEMLTQLEL) form the CUE domain. The interval 355-387 (RNDSADSSIGSSRNSGAYKSGRGRSIYSDKLQS) is disordered. Polar residues predominate over residues 359–371 (ADSSIGSSRNSGA). Residues 485 to 567 (IDLHGLHVSE…QAGLLRVIIY (83 aa)) enclose the Smr domain.

In terms of assembly, interacts with MPC and PAB2. Expressed in cauline leaves, stems, rosette leaves, immature siliques and primary inflorescences.

The protein is Polyadenylate-binding protein-interacting protein 7 (CID7) of Arabidopsis thaliana (Mouse-ear cress).